The primary structure comprises 242 residues: Small ribosomal subunit protein uS2 (242 aa).

This sequence belongs to the universal ribosomal protein uS2 family.

The polypeptide is Small ribosomal subunit protein uS2 (Shewanella baltica (strain OS223)).